The primary structure comprises 427 residues: L-cysteine:1D-myo-inositol 2-amino-2-deoxy-alpha-D-glucopyranoside ligase (427 aa).

Cysteine 46 contributes to the Zn(2+) binding site. L-cysteinyl-5'-AMP-binding positions include 46-49 (CGIT), threonine 61, and 84-86 (NVT). A 'HIGH' region motif is present at residues 48-58 (ITPYDATHMGH). The 'ERGGDP' region signature appears at 186 to 191 (ERGGDP). Tryptophan 233 lines the L-cysteinyl-5'-AMP pocket. Cysteine 237 is a Zn(2+) binding site. L-cysteinyl-5'-AMP is bound at residue 255–257 (GSD). Histidine 262 is a Zn(2+) binding site. Valine 289 is a binding site for L-cysteinyl-5'-AMP. Residues 295-299 (KMSKS) carry the 'KMSKS' region motif.

It belongs to the class-I aminoacyl-tRNA synthetase family. MshC subfamily. As to quaternary structure, monomer. Zn(2+) serves as cofactor.

It catalyses the reaction 1D-myo-inositol 2-amino-2-deoxy-alpha-D-glucopyranoside + L-cysteine + ATP = 1D-myo-inositol 2-(L-cysteinylamino)-2-deoxy-alpha-D-glucopyranoside + AMP + diphosphate + H(+). Functionally, catalyzes the ATP-dependent condensation of GlcN-Ins and L-cysteine to form L-Cys-GlcN-Ins. This chain is L-cysteine:1D-myo-inositol 2-amino-2-deoxy-alpha-D-glucopyranoside ligase, found in Catenulispora acidiphila (strain DSM 44928 / JCM 14897 / NBRC 102108 / NRRL B-24433 / ID139908).